A 369-amino-acid polypeptide reads, in one-letter code: Sesquiterpene cyclase hepA (369 aa).

Mg(2+)-binding residues include Asp-100, Asn-248, Ser-252, and Asp-256. Positions Asp-100–Asp-104 match the DDXXD motif motif. Residues Asn-255–Lys-262 carry the (N,D)D(L,I,V)X(S,T)XXXE motif motif.

It belongs to the terpene synthase family. Mg(2+) is required as a cofactor.

Sesquiterpene cyclase; part of the gene cluster that mediates the biosynthesis of heptelidic acid (HA), a sesquiterpene lactone that acts as an inhibitor of glyceraldehyde-3-phosphatedehydrogenase (GAPDH) and a growth inhibitor of the salt-tolerant lactic acid bacteria in soy sauce brewing. The sequence is that of Sesquiterpene cyclase hepA from Aspergillus oryzae (strain ATCC 42149 / RIB 40) (Yellow koji mold).